The sequence spans 474 residues: Glutamate--tRNA ligase (474 aa).

A 'HIGH' region motif is present at residues 9 to 19 (PSPTGYLHVGG). The 'KMSKS' region motif lies at 240 to 244 (KLSKR). An ATP-binding site is contributed by Lys243.

The protein belongs to the class-I aminoacyl-tRNA synthetase family. Glutamate--tRNA ligase type 1 subfamily. Monomer.

It localises to the cytoplasm. It catalyses the reaction tRNA(Glu) + L-glutamate + ATP = L-glutamyl-tRNA(Glu) + AMP + diphosphate. Functionally, catalyzes the attachment of glutamate to tRNA(Glu) in a two-step reaction: glutamate is first activated by ATP to form Glu-AMP and then transferred to the acceptor end of tRNA(Glu). This chain is Glutamate--tRNA ligase, found in Aliivibrio fischeri (strain ATCC 700601 / ES114) (Vibrio fischeri).